We begin with the raw amino-acid sequence, 652 residues long: Cleavage and polyadenylation specificity factor subunit 6 (652 aa).

Residues 20–85 (QAQDEFGGDG…GVYHQSSGSL (66 aa)) form a disordered region. The RRM domain occupies 93-173 (YQLYVGNLTW…QAPVVTYPSK (81 aa)). Disordered stretches follow at residues 184–440 (KTRP…QQMG) and 518–652 (SYNR…RSRH). Residues 187–203 (PVPPPQQNGPPRGPAPP) are compositionally biased toward pro residues. Over residues 205 to 223 (MGGGPMPTGHPGGPQGGGP) the composition is skewed to gly residues. 3 stretches are compositionally biased toward pro residues: residues 256 to 266 (SGPPRMQPPMH), 295 to 307 (GPRPGPPNGPPQR), and 338 to 352 (PQGPPRGLPPAPGPG). A compositionally biased stretch (low complexity) spans 391–406 (PGMNMPPQQGMNMTPQ). Over residues 420–435 (GPWPPPQGKPPGPFPD) the composition is skewed to pro residues. Over residues 518-528 (SYNRRERSRSR) the composition is skewed to basic and acidic residues. The segment covering 529–538 (ERSHRSRQRR) has biased composition (basic residues). Positions 539-590 (ERSTSRYRERSRERERDRDRERERDGGSYRERSRSRERERQAPDHYRDDSRS) are enriched in basic and acidic residues. A Phosphoserine modification is found at serine 596. The span at 598–610 (EPVVAEAAEAPSS) shows a compositional bias: low complexity. Residues 612-652 (RYYEDRERYRSSDRERRDRDRDRDRERERDRDRREEHRSRH) are compositionally biased toward basic and acidic residues.

This sequence belongs to the RRM CPSF6/7 family.

Its subcellular location is the nucleus. Functionally, may play a role in pre-mRNA 3'-processing. This chain is Cleavage and polyadenylation specificity factor subunit 6, found in Drosophila melanogaster (Fruit fly).